The primary structure comprises 243 residues: Peptide deformylase, mitochondrial (243 aa).

A mitochondrion-targeting transit peptide spans 1–39 (MARLWGALSLWPLWAAVPWGGAAAVGVRACSSTAAPDGV). Substrate is bound by residues G71, P169, and G171. The tract at residues 165 to 175 (LVTFPEGCESV) is hydrophobic dimerization interface. Positions 172 and 214 each coordinate Co(2+). The active site involves E215. H218 provides a ligand contact to Co(2+).

Belongs to the polypeptide deformylase family. Homodimer. Co(2+) serves as cofactor. In terms of tissue distribution, ubiquitous.

The protein resides in the mitochondrion. The enzyme catalyses N-terminal N-formyl-L-methionyl-[peptide] + H2O = N-terminal L-methionyl-[peptide] + formate. Removes the formyl group from the N-terminal Met of newly synthesized proteins. In Homo sapiens (Human), this protein is Peptide deformylase, mitochondrial.